A 549-amino-acid polypeptide reads, in one-letter code: Hydroxylamine reductase (549 aa).

Positions 3, 6, 15, and 21 each coordinate [4Fe-4S] cluster. Hybrid [4Fe-2O-2S] cluster contacts are provided by H244, E268, C313, C405, C433, C458, E492, and K494. Cysteine persulfide is present on C405.

Belongs to the HCP family. The cofactor is [4Fe-4S] cluster. Requires hybrid [4Fe-2O-2S] cluster as cofactor.

The protein resides in the cytoplasm. The enzyme catalyses A + NH4(+) + H2O = hydroxylamine + AH2 + H(+). In terms of biological role, catalyzes the reduction of hydroxylamine to form NH(3) and H(2)O. The chain is Hydroxylamine reductase from Gloeothece citriformis (strain PCC 7424) (Cyanothece sp. (strain PCC 7424)).